Consider the following 612-residue polypeptide: Cyclin-dependent kinase 8 (612 aa).

Residues 23 to 345 (FENSKEIGRG…CEEAMNDIYF (323 aa)) form the Protein kinase domain. ATP is bound by residues 29-37 (IGRGTYGLV) and lysine 57. Residue aspartate 155 is the Proton acceptor of the active site. Low complexity-rich tracts occupy residues 403–455 (QQQM…MGQP), 472–483 (HQMMQQQHQSQH), 543–555 (PQPG…QQRP), 564–573 (QGYMNPQMGM), and 600–612 (NPQQ…QYHR). 2 disordered regions span residues 403–483 (QQQM…QSQH) and 543–612 (PQPG…QYHR).

This sequence belongs to the protein kinase superfamily. CMGC Ser/Thr protein kinase family. CDC2/CDKX subfamily. Component of the Mediator complex. The cofactor is Mg(2+).

The protein localises to the nucleus. The catalysed reaction is L-seryl-[protein] + ATP = O-phospho-L-seryl-[protein] + ADP + H(+). It catalyses the reaction L-threonyl-[protein] + ATP = O-phospho-L-threonyl-[protein] + ADP + H(+). The enzyme catalyses [DNA-directed RNA polymerase] + ATP = phospho-[DNA-directed RNA polymerase] + ADP + H(+). Component of the Mediator complex, a coactivator involved in regulated gene transcription of nearly all RNA polymerase II-dependent genes. Mediator functions as a bridge to convey information from gene-specific regulatory proteins to the basal RNA polymerase II transcription machinery. Mediator is recruited to promoters by direct interactions with regulatory proteins and serves as a scaffold for the assembly of a functional pre-initiation complex with RNA polymerase II and the general transcription factors. Phosphorylates the CTD (C-terminal domain) of the large subunit of RNA polymerase II (RNAp II), which may inhibit the formation of a transcription initiation complex. This chain is Cyclin-dependent kinase 8 (cdk-8), found in Caenorhabditis briggsae.